The chain runs to 496 residues: MVEADHPGKLFIGGLNRETNEKMLKAVFGKHGPISEVLLIKDRTSKSRGFAFITFENPADAKNAAKDMNGKSLHGKAIKVEQAKKPSFQSGGRRRPPASSRNRSPSGSLRSARGSRGGTRGWLPSHEGHLDDGGYTPDLKMSYSRGLIPVKRGPSSRSGGPPPKKSAPSAVARSNSWMGSQGPMSQRRENYGVPPRRATISSWRNDRMSTRHDGYATNDGNHPSCQETRDYAPPSRGYAYRDNGHSNRDEHSSRGYRNHRSSRETRDYAPPSRGHAYRDYGHSRRDESYSRGYRNRRSSRETREYAPPSRGHGYRDYGHSRRHESYSRGYRNHPSSRETRDYAPPHRDYAYRDYGHSSWDEHSSRGYSYHDGYGEALGRDHSEHLSGSSYRDALQRYGTSHGAPPARGPRMSYGGSTCHAYSNTRDRYGRSWESYSSCGDFHYCDREHVCRKDQRNPPSLGRVLPDPREACGSSSYVASIVDGGESRSEKGDSSRY.

The RRM domain occupies 8-85; that stretch reads GKLFIGGLNR…KAIKVEQAKK (78 aa). Disordered stretches follow at residues 78-349 and 452-496; these read IKVE…HRDY and KDQR…SSRY. Low complexity-rich tracts occupy residues 97–114 and 149–159; these read PASS…SARG and PVKRGPSSRSG. The span at 175 to 184 shows a compositional bias: polar residues; that stretch reads NSWMGSQGPM. Composition is skewed to basic and acidic residues over residues 204–214, 242–253, 276–289, 313–326, 335–349, and 484–496; these read RNDRMSTRHDG, DNGHSNRDEHSS, AYRD…DESY, GYRD…HESY, SSRE…HRDY, and GESR…SSRY.

In terms of assembly, interacts with splicing factor proteins SFRS3/SRP20, TRA2B/SFRS10, KHDRBS1/SAM68 and KHDRBS3. In terms of tissue distribution, testis-specific.

The protein localises to the nucleus. Its function is as follows. RNA-binding protein involved in pre-mRNA splicing. Required for sperm development. Acts additively with TRA2B to promote exon 7 inclusion of the survival motor neuron SMN. Binds non-specifically to mRNAs. This Homo sapiens (Human) protein is RNA-binding motif protein, Y chromosome, family 1 member A1 (RBMY1A1).